The chain runs to 184 residues: CDP-archaeol synthase (184 aa).

The next 5 membrane-spanning stretches (helical) occupy residues 4–24, 54–74, 86–106, 122–142, and 145–165; these read IIMV…NPGA, FIGG…IIYI, IISA…GDIT, GSLL…FIFA, and FFLE…LTPP.

It belongs to the CDP-archaeol synthase family. Mg(2+) is required as a cofactor.

Its subcellular location is the cell membrane. The catalysed reaction is 2,3-bis-O-(geranylgeranyl)-sn-glycerol 1-phosphate + CTP + H(+) = CDP-2,3-bis-O-(geranylgeranyl)-sn-glycerol + diphosphate. Its pathway is membrane lipid metabolism; glycerophospholipid metabolism. In terms of biological role, catalyzes the formation of CDP-2,3-bis-(O-geranylgeranyl)-sn-glycerol (CDP-archaeol) from 2,3-bis-(O-geranylgeranyl)-sn-glycerol 1-phosphate (DGGGP) and CTP. This reaction is the third ether-bond-formation step in the biosynthesis of archaeal membrane lipids. The sequence is that of CDP-archaeol synthase from Picrophilus torridus (strain ATCC 700027 / DSM 9790 / JCM 10055 / NBRC 100828 / KAW 2/3).